Reading from the N-terminus, the 1020-residue chain is UPF0182 protein jk1603 (1020 aa).

Pro residues predominate over residues 1 to 18; it reads MSTPTPPSSGRPKQPFPS. Positions 1-23 are disordered; sequence MSTPTPPSSGRPKQPFPSSPGSS. The next 7 helical transmembrane spans lie at 28–48, 73–93, 125–145, 175–195, 227–247, 272–292, and 300–320; these read ILGI…VVVS, LVLF…AAFL, FLVG…QSNW, LPFL…AFVI, LAVI…FDRY, QIVL…TIVL, and LAVA…PAML. Positions 924 to 998 are disordered; sequence QEIDGSVVDP…KVNKTRESGT (75 aa). Basic and acidic residues-rich tracts occupy residues 942 to 961 and 969 to 998; these read KGDK…EQSS and KSDD…ESGT.

This sequence belongs to the UPF0182 family.

The protein resides in the cell membrane. This is UPF0182 protein jk1603 from Corynebacterium jeikeium (strain K411).